The following is a 372-amino-acid chain: Alpha-parvin (372 aa).

Over residues 1-11 (MATSPQKSPSV) the composition is skewed to low complexity. Positions 1–45 (MATSPQKSPSVPKSPTPKSPPSRKKDDSFLGKLGGTLARRKKAKE) are disordered. Ala-2 is subject to N-acetylalanine. Ser-8, Ser-14, and Ser-19 each carry phosphoserine. Residues 21–25 (PSRKK) are interaction with ARHGAP31. A phosphoserine mark is found at Ser-28 and Ser-62. Calponin-homology (CH) domains are found at residues 95-202 (QELM…QYFR) and 262-369 (NVVK…TKYR). The tract at residues 223–372 (GILQSRQIQE…NLFTKYRNVE (150 aa)) is required for interaction with TESK1 and ILK.

It belongs to the parvin family. Component of the heterotrimeric IPP (ILK-PINCH-PARVIN) complex composed of ILK, LIMS1/PINCH and PARVA; the complex binds to F-actin via the C-terminal tail of LIMS1 and the N-terminal region of PARVA, promoting F-actin filament bundling. Formation of the IPP complex is dependent on protein kinase C and precedes integrin-mediated cell adhesion and spreading. Interacts with TGFB1I1. Interacts with ARHGAP31. Interacts with the actin cytoskeleton. Interacts (via C-terminus) with TESK1 (via C-terminus); the interaction inhibits TESK1 kinase activity. Interacts with PXN/PAXILLIN (via LD motif 4). Widely expressed, with highest levels in heart, skeletal muscle, kidney and liver.

The protein resides in the cell junction. It is found in the focal adhesion. It localises to the cell membrane. The protein localises to the cytoplasm. Its subcellular location is the cytoskeleton. The protein resides in the myofibril. It is found in the sarcomere. It localises to the z line. Functionally, plays a role in sarcomere organization and in smooth muscle cell contraction. Required for normal development of the embryonic cardiovascular system, and for normal septation of the heart outflow tract. Plays a role in sprouting angiogenesis and is required for normal adhesion of vascular smooth muscle cells to endothelial cells during blood vessel development. Plays a role in the reorganization of the actin cytoskeleton, formation of lamellipodia and ciliogenesis. Plays a role in the establishment of cell polarity, cell adhesion, cell spreading, and directed cell migration. Within the IPP (ILK-PINCH-PARVIN) complex, binds to F-actin, promoting F-actin bundling, a process required to generate force for actin cytoskeleton reorganization and subsequent dynamic cell adhesion events such as cell spreading and migration. This chain is Alpha-parvin (PARVA), found in Homo sapiens (Human).